The primary structure comprises 410 residues: Putative ribosomal large subunit pseudouridine synthase SVR1, chloroplastic (410 aa).

A chloroplast-targeting transit peptide spans 1 to 35 (MASVAASSSISFAASFLKIKAFPLSPRFFPIRTLR). Positions 96 to 143 (HNLAIDATTQNPKKKDKSKKKQPQATSSSSATTTASSPASHSEVKPKL) are disordered. The segment covering 107-117 (PKKKDKSKKKQ) has biased composition (basic residues). Residues 118–135 (PQATSSSSATTTASSPAS) show a composition bias toward low complexity. One can recognise an S4 RNA-binding domain in the interval 160-229 (QRLSKVLAAA…PKVYFALNKP (70 aa)). The active-site Nucleophile is Asp274.

It belongs to the pseudouridine synthase RsuA family. Highly expressed in young seedlings. Expressed in roots, rosette leaves, cauline leaves, stems and flowers.

Its subcellular location is the plastid. It is found in the chloroplast. Responsible for synthesis of pseudouridine in chloroplastic 23S ribosomal RNA. Necessary for normal chloroplast rRNA processing and translation. Required for normal chloroplast development and maintenance. May function in other plastids, such as root amyloplasts. This Arabidopsis thaliana (Mouse-ear cress) protein is Putative ribosomal large subunit pseudouridine synthase SVR1, chloroplastic (SVR1).